The primary structure comprises 1013 residues: Lysosomal alpha-mannosidase (1013 aa).

The first 49 residues, methionine 1 to alanine 49, serve as a signal peptide directing secretion. 2 disulfide bridges follow: cysteine 55–cysteine 358 and cysteine 268–cysteine 273. Zn(2+)-binding residues include histidine 72, aspartate 74, and aspartate 196. The Nucleophile role is filled by aspartate 196. Asparagine 310, asparagine 345, and asparagine 367 each carry an N-linked (GlcNAc...) asparagine glycan. Cysteine 412 and cysteine 472 form a disulfide bridge. Histidine 446 is a binding site for Zn(2+). Asparagine 489, asparagine 497, asparagine 544, asparagine 633, asparagine 646, asparagine 693, asparagine 767, and asparagine 931 each carry an N-linked (GlcNAc...) asparagine glycan. Cysteines 493 and 501 form a disulfide.

This sequence belongs to the glycosyl hydrolase 38 family. It depends on Zn(2+) as a cofactor.

It is found in the lysosome. The catalysed reaction is Hydrolysis of terminal, non-reducing alpha-D-mannose residues in alpha-D-mannosides.. Functionally, necessary for the catabolism of N-linked carbohydrates released during glycoprotein turnover. This is Lysosomal alpha-mannosidase (Man2b1) from Mus musculus (Mouse).